Consider the following 638-residue polypeptide: Paramyosin (638 aa).

The stretch at 1–638 forms a coiled coil; sequence FSPSTTRLES…EGDISVMQAD (638 aa).

The protein belongs to the paramyosin family. Homodimer.

The protein localises to the cytoplasm. Its subcellular location is the myofibril. In terms of biological role, paramyosin is a major structural component of many thick filaments isolated from invertebrate muscles. This chain is Paramyosin, found in Opisthorchis felineus.